The primary structure comprises 150 residues: Deoxyuridine 5'-triphosphate nucleotidohydrolase (150 aa).

Substrate contacts are provided by residues 69 to 71 (RSG), asparagine 82, 86 to 88 (TID), and lysine 96.

Belongs to the dUTPase family. It depends on Mg(2+) as a cofactor.

It catalyses the reaction dUTP + H2O = dUMP + diphosphate + H(+). The protein operates within pyrimidine metabolism; dUMP biosynthesis; dUMP from dCTP (dUTP route): step 2/2. This enzyme is involved in nucleotide metabolism: it produces dUMP, the immediate precursor of thymidine nucleotides and it decreases the intracellular concentration of dUTP so that uracil cannot be incorporated into DNA. The sequence is that of Deoxyuridine 5'-triphosphate nucleotidohydrolase from Aquifex aeolicus (strain VF5).